We begin with the raw amino-acid sequence, 255 residues long: Thiazole synthase (255 aa).

Catalysis depends on Lys-96, which acts as the Schiff-base intermediate with DXP. 1-deoxy-D-xylulose 5-phosphate contacts are provided by residues Gly-157, 183-184 (AG), and 205-206 (NS).

Belongs to the ThiG family. In terms of assembly, homotetramer. Forms heterodimers with either ThiH or ThiS.

The protein resides in the cytoplasm. The enzyme catalyses [ThiS sulfur-carrier protein]-C-terminal-Gly-aminoethanethioate + 2-iminoacetate + 1-deoxy-D-xylulose 5-phosphate = [ThiS sulfur-carrier protein]-C-terminal Gly-Gly + 2-[(2R,5Z)-2-carboxy-4-methylthiazol-5(2H)-ylidene]ethyl phosphate + 2 H2O + H(+). It functions in the pathway cofactor biosynthesis; thiamine diphosphate biosynthesis. In terms of biological role, catalyzes the rearrangement of 1-deoxy-D-xylulose 5-phosphate (DXP) to produce the thiazole phosphate moiety of thiamine. Sulfur is provided by the thiocarboxylate moiety of the carrier protein ThiS. In vitro, sulfur can be provided by H(2)S. This chain is Thiazole synthase, found in Staphylococcus carnosus (strain TM300).